The primary structure comprises 169 residues: MERAIFAGGCFWCMVQPFEEQAGILSVRSGYTGGHLPNPSYEQVCAKTTGHTEAVEIIFDPKQIAYKDLVELYWAQTDPTDAFGQFEDRGDNYRPVIYYTTERQKEIAEQSKANLQASGRFDQPIVTTIEPAEPFYLAEDYHQGFYKKNPKRYAQSSAIRHQFLEENWS.

Cys10 is a catalytic residue.

This sequence belongs to the MsrA Met sulfoxide reductase family.

It catalyses the reaction L-methionyl-[protein] + [thioredoxin]-disulfide + H2O = L-methionyl-(S)-S-oxide-[protein] + [thioredoxin]-dithiol. The catalysed reaction is [thioredoxin]-disulfide + L-methionine + H2O = L-methionine (S)-S-oxide + [thioredoxin]-dithiol. Its function is as follows. Has an important function as a repair enzyme for proteins that have been inactivated by oxidation. Catalyzes the reversible oxidation-reduction of methionine sulfoxide in proteins to methionine. The sequence is that of Peptide methionine sulfoxide reductase MsrA from Streptococcus pyogenes serotype M12 (strain MGAS2096).